Consider the following 91-residue polypeptide: Small ribosomal subunit protein uS19 (91 aa).

This sequence belongs to the universal ribosomal protein uS19 family.

Functionally, protein S19 forms a complex with S13 that binds strongly to the 16S ribosomal RNA. In Paraburkholderia phymatum (strain DSM 17167 / CIP 108236 / LMG 21445 / STM815) (Burkholderia phymatum), this protein is Small ribosomal subunit protein uS19.